The following is a 224-amino-acid chain: PKHD-type hydroxylase Sbal_3634 (224 aa).

The region spanning 78–176 (QFYPPLFNRY…RTAAFMWLQS (99 aa)) is the Fe2OG dioxygenase domain. Fe cation is bound by residues H96, D98, and H157. R167 is a binding site for 2-oxoglutarate.

The cofactor is Fe(2+). It depends on L-ascorbate as a cofactor.

This Shewanella baltica (strain OS155 / ATCC BAA-1091) protein is PKHD-type hydroxylase Sbal_3634.